Reading from the N-terminus, the 189-residue chain is Glutathione-dependent formaldehyde-activating enzyme (189 aa).

Residues 20–166 (FAGGTLVCAC…LRTIGLEPYD (147 aa)) form the CENP-V/GFA domain. Zn(2+)-binding residues include C27, C29, C48, C50, C53, C95, and C98.

It belongs to the Gfa family. Requires Zn(2+) as cofactor.

It carries out the reaction S-(hydroxymethyl)glutathione = glutathione + formaldehyde. It participates in one-carbon metabolism; formaldehyde degradation; formate from formaldehyde (glutathione route): step 1/3. Its function is as follows. Catalyzes the condensation of formaldehyde and glutathione to S-hydroxymethylglutathione. In Mesorhizobium japonicum (strain LMG 29417 / CECT 9101 / MAFF 303099) (Mesorhizobium loti (strain MAFF 303099)), this protein is Glutathione-dependent formaldehyde-activating enzyme.